The sequence spans 145 residues: Alpha-amylase/trypsin inhibitor CMa (145 aa).

The N-terminal stretch at 1–25 (MASKSSITPLLLAAVLASVFAAATA) is a signal peptide.

This sequence belongs to the protease inhibitor I6 (cereal trypsin/alpha-amylase inhibitor) family. Heterotetramer of one CMa, one CMb and two CMd chains. Post-translationally, five disulfide bonds, which are essential for the inhibitor activity, are probably present. Endosperm.

The protein resides in the secreted. Functionally, alpha-amylase/trypsin inhibitor. It could be involved in insect defense mechanisms. This is Alpha-amylase/trypsin inhibitor CMa (IAT1) from Hordeum vulgare (Barley).